The primary structure comprises 207 residues: MPTLNLFNQAGEKISEVALNDAIFGITPNQQVLYDVVNAQRAALRQGTAKTKTRAEVRGGGKKPWRQKGTGRARQGSIRSPQWRGGGIVFGPIPRSYAVKVNQKVKQLALKSALSYHVLAENLVLVDNITVAEPKTKLFIEIMNNLKLDDRSIVLVDSVDKNLLLASNNLPGAVVREVSQVSVYELLKFKQVVLTQGAVKYYEEVLV.

Residues 47 to 78 are disordered; the sequence is GTAKTKTRAEVRGGGKKPWRQKGTGRARQGSI. The segment covering 60-71 has biased composition (basic residues); the sequence is GGKKPWRQKGTG.

It belongs to the universal ribosomal protein uL4 family. Part of the 50S ribosomal subunit.

In terms of biological role, one of the primary rRNA binding proteins, this protein initially binds near the 5'-end of the 23S rRNA. It is important during the early stages of 50S assembly. It makes multiple contacts with different domains of the 23S rRNA in the assembled 50S subunit and ribosome. Its function is as follows. Forms part of the polypeptide exit tunnel. The protein is Large ribosomal subunit protein uL4 of Acholeplasma laidlawii (strain PG-8A).